We begin with the raw amino-acid sequence, 369 residues long: Phenylalanine--tRNA ligase alpha subunit (369 aa).

Glu269 contacts Mg(2+).

Belongs to the class-II aminoacyl-tRNA synthetase family. Phe-tRNA synthetase alpha subunit type 1 subfamily. In terms of assembly, tetramer of two alpha and two beta subunits. Mg(2+) is required as a cofactor.

Its subcellular location is the cytoplasm. The enzyme catalyses tRNA(Phe) + L-phenylalanine + ATP = L-phenylalanyl-tRNA(Phe) + AMP + diphosphate + H(+). This chain is Phenylalanine--tRNA ligase alpha subunit, found in Brucella melitensis biotype 1 (strain ATCC 23456 / CCUG 17765 / NCTC 10094 / 16M).